A 291-amino-acid chain; its full sequence is UDP-N-acetylenolpyruvoylglucosamine reductase (291 aa).

The region spanning 22–187 is the FAD-binding PCMH-type domain; the sequence is RIGGPARYFK…ASATFQLTKD (166 aa). R166 is an active-site residue. The Proton donor role is filled by C214. E283 is a catalytic residue.

Belongs to the MurB family. It depends on FAD as a cofactor.

It is found in the cytoplasm. The enzyme catalyses UDP-N-acetyl-alpha-D-muramate + NADP(+) = UDP-N-acetyl-3-O-(1-carboxyvinyl)-alpha-D-glucosamine + NADPH + H(+). It functions in the pathway cell wall biogenesis; peptidoglycan biosynthesis. In terms of biological role, cell wall formation. This is UDP-N-acetylenolpyruvoylglucosamine reductase from Chlamydia trachomatis serovar A (strain ATCC VR-571B / DSM 19440 / HAR-13).